Consider the following 542-residue polypeptide: Thermosome subunit (542 aa).

This sequence belongs to the TCP-1 chaperonin family. Forms an oligomeric complex of eight-membered rings.

Its function is as follows. Molecular chaperone; binds unfolded polypeptides in vitro, and has a weak ATPase activity. The sequence is that of Thermosome subunit (ths) from Methanocaldococcus jannaschii (strain ATCC 43067 / DSM 2661 / JAL-1 / JCM 10045 / NBRC 100440) (Methanococcus jannaschii).